A 607-amino-acid polypeptide reads, in one-letter code: Serine/threonine-protein kinase sid2 (607 aa).

Phosphoserine occurs at positions 56, 60, 65, and 86. Residues 93-108 (DRSGELSYKDNNHWSD) show a composition bias toward basic and acidic residues. The segment at 93–118 (DRSGELSYKDNNHWSDRSSTGSPRWE) is disordered. Residues 109–118 (RSSTGSPRWE) are compositionally biased toward polar residues. The region spanning 208–508 (FQTITQVGQG…LKQVMQHPYF (301 aa)) is the Protein kinase domain. Residues 214–222 (VGQGGYGSV) and Lys-237 contribute to the ATP site. Phosphotyrosine is present on Tyr-219. The Proton acceptor role is filled by Asp-331. At Ser-402 the chain carries Phosphoserine. In terms of domain architecture, AGC-kinase C-terminal spans 509-589 (SKIDWKNVRT…RHQKNSHPTS (81 aa)). The disordered stretch occupies residues 586–607 (HPTSSSSALSSPLSAPSFGTLL). A compositionally biased stretch (low complexity) spans 589-607 (SSSSALSSPLSAPSFGTLL).

The protein belongs to the protein kinase superfamily. Ser/Thr protein kinase family. As to quaternary structure, interacts with mob1 and cdc11.

Its subcellular location is the cytoplasm. The protein resides in the cytoskeleton. The protein localises to the microtubule organizing center. It localises to the spindle pole body. It carries out the reaction L-seryl-[protein] + ATP = O-phospho-L-seryl-[protein] + ADP + H(+). The catalysed reaction is L-threonyl-[protein] + ATP = O-phospho-L-threonyl-[protein] + ADP + H(+). Part of a signaling pathway. Required for initiation of medial ring constriction and septation. This Schizosaccharomyces pombe (strain 972 / ATCC 24843) (Fission yeast) protein is Serine/threonine-protein kinase sid2 (sid2).